We begin with the raw amino-acid sequence, 143 residues long: Larval cuticle protein LCP-17 (143 aa).

A signal peptide spans 1–16; sequence MKFLIVLAVAVACASA. The Chitin-binding type R&amp;R domain occupies 41–110; it reads EGHFQFNYET…PQGSHLPTPH (70 aa).

Functionally, component of the cuticle of the larva of Bombyx mori. This chain is Larval cuticle protein LCP-17 (LCP17), found in Bombyx mori (Silk moth).